The chain runs to 330 residues: RNA/RNP complex-1-interacting phosphatase (330 aa).

Positions 1-12 are enriched in basic residues; that stretch reads MSQWHHPRSGWG. Residues 1 to 32 form a disordered region; the sequence is MSQWHHPRSGWGRRRDFSGRSSAKKKGGNHIP. Residues 61–208 form the Tyrosine-protein phosphatase domain; that stretch reads FEKKLAPEEC…LQNGPIRKNW (148 aa). Catalysis depends on Cys-152, which acts as the Phosphocysteine intermediate. A substrate-binding site is contributed by 153–158; the sequence is THGLNR. The active-site Proton donor/acceptor is Arg-158.

This sequence belongs to the protein-tyrosine phosphatase family. Non-receptor class dual specificity subfamily. In terms of assembly, monomer. May interact with SFRS7 and SFRS9/SRP30C.

Its subcellular location is the nucleus. It is found in the nucleus speckle. Its function is as follows. Possesses RNA 5'-triphosphatase and diphosphatase activities, but displays a poor protein-tyrosine phosphatase activity. In addition, has phosphatase activity with ATP, ADP and O-methylfluorescein phosphate (in vitro). Binds to RNA. May participate in nuclear mRNA metabolism. The chain is RNA/RNP complex-1-interacting phosphatase from Homo sapiens (Human).